Here is a 363-residue protein sequence, read N- to C-terminus: Phospho-N-acetylmuramoyl-pentapeptide-transferase (363 aa).

Helical transmembrane passes span Gln3–Ile23, Gly48–Ala68, Pro83–Leu103, Ala121–Ala141, Phe159–Met179, Leu192–Phe212, Pro234–Trp254, Ile261–Cys281, Leu286–Val306, and Phe340–Ala360.

Belongs to the glycosyltransferase 4 family. MraY subfamily. The cofactor is Mg(2+).

Its subcellular location is the cell membrane. It carries out the reaction UDP-N-acetyl-alpha-D-muramoyl-L-alanyl-gamma-D-glutamyl-meso-2,6-diaminopimeloyl-D-alanyl-D-alanine + di-trans,octa-cis-undecaprenyl phosphate = di-trans,octa-cis-undecaprenyl diphospho-N-acetyl-alpha-D-muramoyl-L-alanyl-D-glutamyl-meso-2,6-diaminopimeloyl-D-alanyl-D-alanine + UMP. It participates in cell wall biogenesis; peptidoglycan biosynthesis. Catalyzes the initial step of the lipid cycle reactions in the biosynthesis of the cell wall peptidoglycan: transfers peptidoglycan precursor phospho-MurNAc-pentapeptide from UDP-MurNAc-pentapeptide onto the lipid carrier undecaprenyl phosphate, yielding undecaprenyl-pyrophosphoryl-MurNAc-pentapeptide, known as lipid I. The chain is Phospho-N-acetylmuramoyl-pentapeptide-transferase from Streptomyces coelicolor (strain ATCC BAA-471 / A3(2) / M145).